A 329-amino-acid chain; its full sequence is Transcription factor RAX1 (329 aa).

HTH myb-type domains are found at residues 9-62 (KTKV…LNYL) and 63-117 (RPNI…RKKL). 2 consecutive DNA-binding regions (H-T-H motif) follow at residues 38-62 (WISF…LNYL) and 90-113 (WSII…NTKL). 2 stretches are compositionally biased toward low complexity: residues 122–131 (SDSSSSAMAS) and 144–154 (PTSPTTIPSSS). The interval 122–162 (SDSSSSAMASPYLNPISQDVKRPTSPTTIPSSSYNPYAENP) is disordered.

Mostly expressed in roots. Also present in shoot tips and flower buds.

The protein localises to the nucleus. In terms of biological role, transcription activator of genes involved in the regulation of meristematic competence, such as CUC2. Positively regulates axillary meristems (AMs) formation and development, especially at early phases of vegetative growth, probably by specifying a stem cell niche for AM formation. Modulates the negative regulation mediated by gibberellic acid on the timing of developmental phase transitions. The chain is Transcription factor RAX1 (RAX1) from Arabidopsis thaliana (Mouse-ear cress).